A 529-amino-acid polypeptide reads, in one-letter code: Delayed-rectifier potassium channel regulatory subunit KCNS1 (529 aa).

At 1–217 (MLMLLVRGTH…LTMENPGYSL (217 aa)) the chain is on the cytoplasmic side. A helical membrane pass occupies residues 218 to 239 (PSKLFSCVSISVVLASIAAMCI). At 240–270 (HSLPEYQAREAAAAVAAVAAGRSPEGVRDDP) the chain is on the extracellular side. Residues 271-293 (VLRRLEYFCIAWFSFEVSSRLLL) form a helical membrane-spanning segment. Topologically, residues 294–304 (APSTRNFFCHP) are cytoplasmic. The helical transmembrane segment at 305–322 (LNLIDIVSVLPFYLTLLA) threads the bilayer. The Extracellular portion of the chain corresponds to 323 to 340 (GVALGDQGGTGGKELGHL). A helical; Voltage-sensor transmembrane segment spans residues 341–361 (GKVVQVFRLMRIFRVLKLARH). The Cytoplasmic segment spans residues 362-376 (STGLRSLGATLKHSY). Residues 377–398 (REVGILLLYLAVGVSVFSGVAY) traverse the membrane as a helical segment. Over 399 to 411 (TAEKEEDVGFNTI) the chain is Extracellular. The helical intramembrane region spans 412 to 423 (PACWWWGTVSMT). The short motif at 424-429 (TVGYGD) is the Selectivity filter element. Residues 424–431 (TVGYGDVV) lie within the membrane without spanning it. Residues 432-438 (PVTVAGK) are Extracellular-facing. The helical transmembrane segment at 439-467 (LAASGCILGGILVVALPITIIFNKFSHFY) threads the bilayer. The Cytoplasmic portion of the chain corresponds to 468–529 (RRQKALEAAV…PSEPPHPQMY (62 aa)). A disordered region spans residues 496 to 529 (SEASLETSRETSQEGRSADLETQAPSEPPHPQMY). Basic and acidic residues predominate over residues 502-514 (TSRETSQEGRSAD).

The protein belongs to the potassium channel family. S (TC 1.A.1.2) subfamily. Kv9.1/KCNS1 sub-subfamily. In terms of assembly, heterotetramer with KCNB1. Heterotetramer with KCNB2. Does not form homomultimers.

It is found in the cell membrane. Its function is as follows. Potassium channel regulatory subunit that modulate the delayed rectifier voltage-gated potassium channel activity of KCNB1 and KCNB2 by altering their kinetics, expression levels, and shifting the half-inactivation potential to more polarized values. While it does not form functional channels on its own, it can form functional heterotetrameric channels with KCNB1 and KCNB2. Each regulatory subunit has unique regulatory properties that can lead to extensive inhibition, significant changes in kinetics, and/or substantial shifts in the voltage dependencies of the inactivation process. In Papio anubis (Olive baboon), this protein is Delayed-rectifier potassium channel regulatory subunit KCNS1.